Consider the following 204-residue polypeptide: HTH-type transcriptional activator BcrR (204 aa).

Residues methionine 1–lysine 81 lie on the Cytoplasmic side of the membrane. The HTH cro/C1-type domain occupies leucine 7–leucine 61. Positions glutamine 18–serine 37 form a DNA-binding region, H-T-H motif. A helical transmembrane segment spans residues isoleucine 82–leucine 102. The Extracellular segment spans residues tyrosine 103–asparagine 126. A helical membrane pass occupies residues leucine 127–serine 147. Residues threonine 148–lysine 154 lie on the Cytoplasmic side of the membrane. Residues tryptophan 155–alanine 175 traverse the membrane as a helical segment. Residues alanine 176–tyrosine 181 are Extracellular-facing. The chain crosses the membrane as a helical span at residues isoleucine 182–glycine 202. Over methionine 203–lysine 204 the chain is Cytoplasmic.

The protein resides in the cell membrane. With respect to regulation, constitutively bound to the bcrABD promoter. Requires bacitracin for activation, probably through a conformational change, such as the oligomerization of inactive dimers to form active tetramers. Its function is as follows. Functions both as a membrane-bound sensor and a transducer of bacitracin availability to activate transcription of the bcrABD operon in the presence of bacitracin. Binds specifically to two inverted repeat sequences on the bcrABD promoter, irrespective of bacitracin concentration. The sequence is that of HTH-type transcriptional activator BcrR from Enterococcus faecalis (Streptococcus faecalis).